The sequence spans 247 residues: 3-deoxy-manno-octulosonate cytidylyltransferase (247 aa).

The protein belongs to the KdsB family.

The protein localises to the cytoplasm. It carries out the reaction 3-deoxy-alpha-D-manno-oct-2-ulosonate + CTP = CMP-3-deoxy-beta-D-manno-octulosonate + diphosphate. Its pathway is nucleotide-sugar biosynthesis; CMP-3-deoxy-D-manno-octulosonate biosynthesis; CMP-3-deoxy-D-manno-octulosonate from 3-deoxy-D-manno-octulosonate and CTP: step 1/1. The protein operates within bacterial outer membrane biogenesis; lipopolysaccharide biosynthesis. Activates KDO (a required 8-carbon sugar) for incorporation into bacterial lipopolysaccharide in Gram-negative bacteria. In Methylobacterium sp. (strain 4-46), this protein is 3-deoxy-manno-octulosonate cytidylyltransferase.